The primary structure comprises 747 residues: Polyribonucleotide nucleotidyltransferase (747 aa).

Mg(2+) contacts are provided by Asp502 and Asp508. In terms of domain architecture, KH spans 569 to 628 (PRMLTITIDPDKIRDIIGPGGKIIKKIIEETGVEIDVEDDGRVFIASTDAAAGERALKII). An S1 motif domain is found at 638-712 (GKVYNGKVTR…PQGRLKLSRK (75 aa)). The segment at 718-747 (STVGEGGHRHFRRAGREGGHRGLNNRRQSR) is disordered.

The protein belongs to the polyribonucleotide nucleotidyltransferase family. It depends on Mg(2+) as a cofactor.

It is found in the cytoplasm. The enzyme catalyses RNA(n+1) + phosphate = RNA(n) + a ribonucleoside 5'-diphosphate. Its function is as follows. Involved in mRNA degradation. Catalyzes the phosphorolysis of single-stranded polyribonucleotides processively in the 3'- to 5'-direction. This is Polyribonucleotide nucleotidyltransferase from Moorella thermoacetica (strain ATCC 39073 / JCM 9320).